Reading from the N-terminus, the 292-residue chain is 33 kDa chaperonin (292 aa).

2 disulfide bridges follow: Cys-230-Cys-232 and Cys-263-Cys-266.

It belongs to the HSP33 family. Under oxidizing conditions two disulfide bonds are formed involving the reactive cysteines. Under reducing conditions zinc is bound to the reactive cysteines and the protein is inactive.

Its subcellular location is the cytoplasm. Redox regulated molecular chaperone. Protects both thermally unfolding and oxidatively damaged proteins from irreversible aggregation. Plays an important role in the bacterial defense system toward oxidative stress. The polypeptide is 33 kDa chaperonin (Shigella boydii serotype 4 (strain Sb227)).